The chain runs to 376 residues: Dehydrogenase/reductase SDR family member FEY (376 aa).

Position 2 is an N-acetylserine (Ser-2). Position 61 to 85 (61 to 85) interacts with NAD(+); that stretch reads VVTGSTSGIGRETARQLAEAGAHVV. Ser-199 lines the substrate pocket. Catalysis depends on Tyr-227, which acts as the Proton acceptor.

It belongs to the short-chain dehydrogenases/reductases (SDR) family. Expressed in roots, stems, leaves and flowers and, at lower levels, in siliques.

Putative oxidoreductase. Required for vegetative shoot apex development, especially during leaf positioning and for shoot apical meristem (SAM) maintenance. The protein is Dehydrogenase/reductase SDR family member FEY of Arabidopsis thaliana (Mouse-ear cress).